A 275-amino-acid chain; its full sequence is Polyamine aminopropyltransferase (275 aa).

The 234-residue stretch at 2–235 (EFWFTEKQTE…GMWTFTIGSK (234 aa)) folds into the PABS domain. Glutamine 31 contributes to the S-methyl-5'-thioadenosine binding site. Spermidine-binding residues include histidine 62 and aspartate 86. S-methyl-5'-thioadenosine-binding positions include aspartate 106 and 137-138 (DG). Aspartate 155 serves as the catalytic Proton acceptor. 155 to 158 (DSTE) contacts spermidine. Residue proline 162 coordinates S-methyl-5'-thioadenosine.

The protein belongs to the spermidine/spermine synthase family. In terms of assembly, homodimer or homotetramer.

It localises to the cytoplasm. The catalysed reaction is S-adenosyl 3-(methylsulfanyl)propylamine + putrescine = S-methyl-5'-thioadenosine + spermidine + H(+). It participates in amine and polyamine biosynthesis; spermidine biosynthesis; spermidine from putrescine: step 1/1. In terms of biological role, catalyzes the irreversible transfer of a propylamine group from the amino donor S-adenosylmethioninamine (decarboxy-AdoMet) to putrescine (1,4-diaminobutane) to yield spermidine. The sequence is that of Polyamine aminopropyltransferase from Shouchella clausii (strain KSM-K16) (Alkalihalobacillus clausii).